Here is a 268-residue protein sequence, read N- to C-terminus: Helix-loop-helix protein 25 (268 aa).

The span at 1–23 shows a compositional bias: polar residues; it reads MPKVIQSSMSDYRSVPYNQTPKS. Positions 1-29 are disordered; sequence MPKVIQSSMSDYRSVPYNQTPKSASERKR. The interval 92-105 is basic motif; that stretch reads ERRKVKTEREKIRR. Residues 92 to 149 form the bHLH domain; it reads ERRKVKTEREKIRRKKQDDCYAELKFFILNKQMGSYEQRLKLERITILEIIIDYIKHN. Residues 106-149 are helix-loop-helix motif; it reads KKQDDCYAELKFFILNKQMGSYEQRLKLERITILEIIIDYIKHN.

It localises to the nucleus. Its function is as follows. Probable transcription factor. Modulates lifespan and also recovery from the developmentally arrested larval state known as dauer, perhaps acting upstream of phosphatase PTEN/daf-18. Regulates expression of genes involved in cell division, cell-cycle regulation, and sexual reproduction, including daf-18. The chain is Helix-loop-helix protein 25 from Caenorhabditis elegans.